We begin with the raw amino-acid sequence, 215 residues long: Pyrrolidone-carboxylate peptidase (215 aa).

Catalysis depends on residues E78, C141, and H165.

It belongs to the peptidase C15 family. Homotetramer.

It is found in the cytoplasm. It carries out the reaction Release of an N-terminal pyroglutamyl group from a polypeptide, the second amino acid generally not being Pro.. Its function is as follows. Removes 5-oxoproline from various penultimate amino acid residues except L-proline. The chain is Pyrrolidone-carboxylate peptidase from Streptococcus pyogenes serotype M3 (strain SSI-1).